A 525-amino-acid polypeptide reads, in one-letter code: Ribosomal protein S6 kinase beta-1 (525 aa).

The interval 1 to 54 is disordered; sequence MRRRRRRDGFYPAPDFRDREAEDMAGVFDIDLDQPEDAGSEDELEEGGQLNESM. Positions 28–32 match the TOS motif motif; the sequence is FDIDL. Residues 30 to 46 show a composition bias toward acidic residues; it reads IDLDQPEDAGSEDELEE. Residues 91–352 enclose the Protein kinase domain; it reads FELLRVLGKG…AGEVQAHPFF (262 aa). Residues 97–105 and K123 each bind ATP; that span reads LGKGGYGKV. Catalysis depends on D218, which acts as the Proton acceptor. T252 carries the phosphothreonine; by PDPK1 modification. Positions 353 to 423 constitute an AGC-kinase C-terminal domain; the sequence is RHINWEELLA…VAPSVLESVK (71 aa). A disordered region spans residues 380 to 399; it reads SQFDSKFTRQTPVDSPDDST. A compositionally biased stretch (polar residues) spans 381-399; that stretch reads QFDSKFTRQTPVDSPDDST. A Phosphoserine modification is found at S394. T412 is subject to Phosphothreonine; by MTOR, NEK6 and NEK7. Residues 424–525 form an autoinhibitory domain region; it reads EKFSFEPKIR…KRPEHLRMNL (102 aa). A phosphoserine mark is found at S434 and S441. Residue T444 is modified to Phosphothreonine. Residues S447 and S452 each carry the phosphoserine modification. The tract at residues 486 to 509 is disordered; it reads VTTSGEASAPLPIRQPNSGPYKKQ. K516 is subject to N6-acetyllysine.

The protein belongs to the protein kinase superfamily. AGC Ser/Thr protein kinase family. S6 kinase subfamily. In terms of assembly, interacts with PPP1R9A/neurabin-1. Interacts with RPTOR. Interacts with IRS1. Interacts with EIF3B and EIF3C. Interacts with TRAF4. Interacts with POLDIP3. Interacts (via N-terminus) with IER5. Phosphorylation at Thr-412 is regulated by mTORC1. The phosphorylation at this site is maintained by an agonist-dependent autophosphorylation mechanism. Activated by phosphorylation at Thr-252 by PDPK1. Dephosphorylation by PPP1CC at Thr-412 in mitochondrion.

It localises to the cytoplasm. The protein localises to the synapse. The protein resides in the synaptosome. It is found in the mitochondrion outer membrane. Its subcellular location is the mitochondrion. The catalysed reaction is L-seryl-[protein] + ATP = O-phospho-L-seryl-[protein] + ADP + H(+). It carries out the reaction L-threonyl-[protein] + ATP = O-phospho-L-threonyl-[protein] + ADP + H(+). With respect to regulation, activation requires multiple phosphorylation events on serine/threonine residues. Activation appears to be first mediated by phosphorylation of multiple sites in the autoinhibitory domain, which facilitates phosphorylation at Thr-412, disrupting the autoinhibitory mechanism and allowing phosphorylation of Thr-252 by PDPK1. The active conformation of the kinase is believed to be stabilized by a mechanism involving three conserved phosphorylation sites located in the kinase domain activation loop (Thr-252) and in the AGC-kinase C-terminal domain (Ser-394 in the middle of the tail/linker region and Thr-412 within a hydrophobic motif at its end). Activated by mTORC1; isoform Alpha I and isoform Alpha II are sensitive to rapamycin, which inhibits activating phosphorylation at Thr-412. Activated by PDPK1. Its function is as follows. Serine/threonine-protein kinase that acts downstream of mTOR signaling in response to growth factors and nutrients to promote cell proliferation, cell growth and cell cycle progression. Regulates protein synthesis through phosphorylation of EIF4B, RPS6 and EEF2K, and contributes to cell survival by repressing the pro-apoptotic function of BAD. Under conditions of nutrient depletion, the inactive form associates with the EIF3 translation initiation complex. Upon mitogenic stimulation, phosphorylation by the mechanistic target of rapamycin complex 1 (mTORC1) leads to dissociation from the EIF3 complex and activation. The active form then phosphorylates and activates several substrates in the pre-initiation complex, including the EIF2B complex and the cap-binding complex component EIF4B. Also controls translation initiation by phosphorylating a negative regulator of EIF4A, PDCD4, targeting it for ubiquitination and subsequent proteolysis. Promotes initiation of the pioneer round of protein synthesis by phosphorylating POLDIP3/SKAR. In response to IGF1, activates translation elongation by phosphorylating EEF2 kinase (EEF2K), which leads to its inhibition and thus activation of EEF2. Also plays a role in feedback regulation of mTORC2 by mTORC1 by phosphorylating MAPKAP1/SIN1, MTOR and RICTOR, resulting in the inhibition of mTORC2 and AKT1 signaling. Also involved in feedback regulation of mTORC1 and mTORC2 by phosphorylating DEPTOR. Mediates cell survival by phosphorylating the pro-apoptotic protein BAD and suppressing its pro-apoptotic function. Phosphorylates mitochondrial URI1 leading to dissociation of a URI1-PPP1CC complex. The free mitochondrial PPP1CC can then dephosphorylate RPS6KB1 at Thr-412, which is proposed to be a negative feedback mechanism for the RPS6KB1 anti-apoptotic function. Mediates TNF-alpha-induced insulin resistance by phosphorylating IRS1 at multiple serine residues, resulting in accelerated degradation of IRS1. In cells lacking functional TSC1-2 complex, constitutively phosphorylates and inhibits GSK3B. May be involved in cytoskeletal rearrangement through binding to neurabin. Phosphorylates and activates the pyrimidine biosynthesis enzyme CAD, downstream of MTOR. Following activation by mTORC1, phosphorylates EPRS and thereby plays a key role in fatty acid uptake by adipocytes and also most probably in interferon-gamma-induced translation inhibition. This Oryctolagus cuniculus (Rabbit) protein is Ribosomal protein S6 kinase beta-1 (RPS6KB1).